A 732-amino-acid chain; its full sequence is Exonuclease 1 (732 aa).

The segment at 1–99 is N-domain; it reads MGITGLIPFV…KRRRDSRKQS (99 aa). Residues Asp-30, Asp-78, Glu-150, Asp-152, Asp-171, Asp-173, and Asp-226 each coordinate Mg(2+). Residues 138-230 are I-domain; the sequence is RSRNVDCIVA…ILSGCDYLDS (93 aa). Disordered stretches follow at residues 422–471, 524–625, and 661–716; these read YSFK…QRSP, DEQT…TNST, and SCSS…VSQN. 2 positions are modified to phosphoserine: Ser-431 and Ser-433. Residues 432–442 are compositionally biased toward basic and acidic residues; it reads PSREDSVDQER. The residue at position 443 (Thr-443) is a Phosphothreonine. Residue Ser-447 is modified to Phosphoserine. 2 stretches are compositionally biased toward basic and acidic residues: residues 457 to 467 and 525 to 537; these read FAKERTGEEAN and EQTR…LRDT. Polar residues-rich tracts occupy residues 572-593 and 608-625; these read RCSS…SLLE and DLNN…TNST. Low complexity predominate over residues 661 to 677; it reads SCSSDQRASSTSSSSQQ. Polar residues predominate over residues 703-716; it reads KSRTNGKLGAVSQN.

It belongs to the XPG/RAD2 endonuclease family. EXO1 subfamily. Mg(2+) is required as a cofactor. In terms of tissue distribution, specifically expressed in the female germline.

It is found in the nucleus. In terms of biological role, 5'-&gt;3' double-stranded DNA exonuclease which may also contain a cryptic 3'-&gt;5' double-stranded DNA exonuclease activity. Also exhibits endonuclease activity against 5'-overhanging flap structures similar to those generated by displacement synthesis when DNA polymerase encounters the 5'-end of a downstream Okazaki fragment. Required for DNA mismatch repair (MMR). The chain is Exonuclease 1 (tos) from Drosophila melanogaster (Fruit fly).